Consider the following 1318-residue polypeptide: MEERGRETQMPVARYGGPFIMVRLFGQDGEANIQEQRLYELLSDPRSALGLDPGPLIAENLLLVALRGTNNDPRPQRQERARELALVGILLGNGEQGEHLGTESALEASGNNYVYAYGPDWMARPSTWSAEIQQFLRLLGATYVLRVEMGRQFGFEVHRSRPSFRQFQAINHLVLFDNALRKYDSGQVAAGFQRALLVAGPETADTRPDLRKLNEWVFGGRAAGGRQLADELKIVSALRDTYSGHLVLQPTETLDTWKVLSRDTRTAHSLEHGFIHAAGTIQANCPQLFMRRQHPGLFPFVNAIASSLGWYYQTATGPGADARAAARRQQAFQTRAAAECHAKSGVPVVAGFYRTINATLKGGEGLQPTMFNGELGAIKHQALDTVRYDYGHYLIMLGPFQPWSGLTAPPCPYAESSWAQAAVQTALELFSALYPAPCISGYARPPGPSAVIEHLRSLVPKGGLLLFLSHLPDDVKDGLGEMGPARATGPGMQQFVGSYFLNPACSNVFITVRQRGEKINGRTVLQALGRACDMAGCQHYVLGSTVPLGGLNFVNDLASPVSTAEMMDDFSPFFTVEFPPIQEEGASSPVPLDVDESMDISPSYELPWLSLESCLTSILSHPTVGSKEHLVRHTDRVSGGRVAQQPGVGPLDLPLADYAFVAHSQVWTRPGGAPPLPYRTWDRMTEKLLVSAKPGGENVKVSGTVITLGEQGYKVSLDLREGTRLAMAEALLNAAFAPILDPEDVLLTLHLHLDPSRADNSAVMEAMTAASDYARGLGVKLTFGSASCPETGSSASSFMTVVASVSAPGEFSGPLITPVLQKTGSLLIAVRCGDGKIQGGSLFEQLFSDVATTPRAPEALSLKNLFRAVQQLVKSGIVLSGHDISDGGLVTCLVEMALAGQRGVTITMPVASDYLPEMFAEHPGLVFEVEERSVGEVLQTLRSMNMYPAVLGRVGEQGPDQMFEVQHGPETVLRQSLRLLLGTWSSFASEQYECLRPDRINRSMHVSDYGYNEALAVSPLTGKNLSPRRLVTEPDPRCQVAVLCAPGTRGHESLLAAFTNAGCLCRRVFFREVRDNTFLDKYVGLAIGGVHGARDSALAGRATVALINRSPALRDAILKFLNRPDTFSVALGELGVQVLAGLGAVGSTDNPPAPGVEVNVQRSPLILAPNASGMFESRWLNISIPATTSSVMLRGLRGCVLPCWVQGSCLGLQFTNLGMPYVLQNAHQIACHFHSNGTDAWRFAMNYPRNPTEQGNIAGLCSRDGRHLALLCDPSLCTDFWQWEHIPPAFGHPTGCSPWTLMFQAAHLWSLRHGRPSE.

The protein belongs to the herpesviridae MTP family. Interacts with host DAXX; this interaction disrupts the chromatin remodeling complex ATRX:DAXX and thus allows viral transcription. Interacts with host SMC6; this interaction targets SMC5-SMC6 complex for proteasomal degradation.

The protein localises to the virion tegument. It is found in the host nucleus. Functionally, tegument protein that plays a role in the inhibition of host intrinsic defenses to promote viral early gene activation. Interacts with host DAXX and thereby disrupts the complex between DAXX and ATRX. Suppresses the DAXX-ATRX dependent deposition of histone H3.3 on viral chromatin allowing viral transcription. Targets also host SMC5/6 for proteasomal degradation in a CUL7 and calpain-dependent manner to support nuclear membrane-less replication compartment formation and lytic virus replication. The polypeptide is Major tegument protein (Epstein-Barr virus (strain GD1) (HHV-4)).